Here is a 51-residue protein sequence, read N- to C-terminus: Large ribosomal subunit protein eL39 (51 aa).

The protein belongs to the eukaryotic ribosomal protein eL39 family.

The protein is Large ribosomal subunit protein eL39 of Methanobrevibacter smithii (strain ATCC 35061 / DSM 861 / OCM 144 / PS).